Reading from the N-terminus, the 377-residue chain is Pulmonary surfactant-associated protein B (377 aa).

The signal sequence occupies residues 1-22; sequence MAKSHLLQWLLLLPTLCCPGAA. Residues 23-191 constitute a propeptide that is removed on maturation; that stretch reads ITSASSLECA…PHTQDFSEQQ (169 aa). Residues 24–64 enclose the Saposin A-type domain; it reads TSASSLECAQGPQFWCQSLEHAVQCRALGHCLQEVWGHAGA. 3 Saposin B-type domains span residues 64–146, 195–272, and 291–366; these read ANDL…PRGQ, PLPF…STED, and QDTE…EAPA. Cystine bridges form between C68–C142, C71–C136, C99–C111, C199–C268, C202–C262, C226–C237, C295–C362, C298–C356, and C321–C331. The propeptide occupies 271 to 377; the sequence is EDAMGPALPA…PLQCFQTPHL (107 aa). N-linked (GlcNAc...) asparagine glycosylation occurs at N307.

As to quaternary structure, homodimer; disulfide-linked.

It localises to the secreted. The protein localises to the extracellular space. The protein resides in the surface film. Functionally, pulmonary surfactant-associated proteins promote alveolar stability by lowering the surface tension at the air-liquid interface in the peripheral air spaces. SP-B increases the collapse pressure of palmitic acid to nearly 70 millinewtons per meter. This chain is Pulmonary surfactant-associated protein B (Sftpb), found in Mus musculus (Mouse).